The primary structure comprises 65 residues: U11-theraphotoxin-Cg1a (65 aa).

The signal sequence occupies residues 1–21 (MKTTILLVILGLTLLFALSAA). The propeptide occupies 22-29 (TELKDEER). Disulfide bonds link cysteine 31-cysteine 45, cysteine 38-cysteine 50, and cysteine 44-cysteine 57.

Belongs to the neurotoxin 10 (Hwtx-1) family. 32 (Jztx-16) subfamily. Expressed by the venom gland.

The protein localises to the secreted. Functionally, probable ion channel inhibitor. This is U11-theraphotoxin-Cg1a from Chilobrachys guangxiensis (Chinese earth tiger tarantula).